The primary structure comprises 192 residues: MKAVKIVEGRAYPLGESNIDTDIIIPAHYLKTTDRKGLAKGAFETIRAKEGNVFDNPEYKGAPILIAGDNFGCGSSREHAAWAIKEMGVEAVIAPRFSDIFSGNAFKNGLLTVVLPEADVERLLEVAKTDPITLDLENQVVTTPFQDRFHFDIDPFRKRCLLEGLDEIGLTLKDQDKISQYEDVLASDRPWV.

This sequence belongs to the LeuD family. LeuD type 1 subfamily. In terms of assembly, heterodimer of LeuC and LeuD.

It carries out the reaction (2R,3S)-3-isopropylmalate = (2S)-2-isopropylmalate. It participates in amino-acid biosynthesis; L-leucine biosynthesis; L-leucine from 3-methyl-2-oxobutanoate: step 2/4. Catalyzes the isomerization between 2-isopropylmalate and 3-isopropylmalate, via the formation of 2-isopropylmaleate. This is 3-isopropylmalate dehydratase small subunit from Zymomonas mobilis subsp. mobilis (strain ATCC 31821 / ZM4 / CP4).